A 105-amino-acid chain; its full sequence is N(2)-fixation sustaining protein CowN (105 aa).

Belongs to the CowN family.

Its function is as follows. Is required to sustain N(2)-dependent growth in the presence of low levels of carbon monoxide (CO). Probably acts by protecting the N(2) fixation ability of the nitrogenase complex, which is inactivated in the presence of CO. This chain is N(2)-fixation sustaining protein CowN, found in Tolumonas auensis (strain DSM 9187 / NBRC 110442 / TA 4).